The following is a 68-amino-acid chain: UPF0253 protein AHA_2115 (68 aa).

It belongs to the UPF0253 family.

This chain is UPF0253 protein AHA_2115, found in Aeromonas hydrophila subsp. hydrophila (strain ATCC 7966 / DSM 30187 / BCRC 13018 / CCUG 14551 / JCM 1027 / KCTC 2358 / NCIMB 9240 / NCTC 8049).